The chain runs to 113 residues: Cell cycle protein GpsB (113 aa).

Positions 36–68 form a coiled coil; the sequence is LDMVIKDYSTFTQEIEALQAENIRLVQELDNAP.

It belongs to the GpsB family. Forms polymers through the coiled coil domains. Interacts with PBP1, MreC and EzrA.

The protein localises to the cytoplasm. Divisome component that associates with the complex late in its assembly, after the Z-ring is formed, and is dependent on DivIC and PBP2B for its recruitment to the divisome. Together with EzrA, is a key component of the system that regulates PBP1 localization during cell cycle progression. Its main role could be the removal of PBP1 from the cell pole after pole maturation is completed. Also contributes to the recruitment of PBP1 to the division complex. Not essential for septum formation. This is Cell cycle protein GpsB from Listeria welshimeri serovar 6b (strain ATCC 35897 / DSM 20650 / CCUG 15529 / CIP 8149 / NCTC 11857 / SLCC 5334 / V8).